The chain runs to 266 residues: Glucosamine-6-phosphate deaminase (266 aa).

Asp-72 (proton acceptor; for enolization step) is an active-site residue. Catalysis depends on Asp-141, which acts as the For ring-opening step. His-143 serves as the catalytic Proton acceptor; for ring-opening step. Glu-148 (for ring-opening step) is an active-site residue.

It belongs to the glucosamine/galactosamine-6-phosphate isomerase family. NagB subfamily. In terms of assembly, homohexamer.

It catalyses the reaction alpha-D-glucosamine 6-phosphate + H2O = beta-D-fructose 6-phosphate + NH4(+). Its pathway is amino-sugar metabolism; N-acetylneuraminate degradation; D-fructose 6-phosphate from N-acetylneuraminate: step 5/5. Allosterically activated by N-acetylglucosamine 6-phosphate (GlcNAc6P). Functionally, catalyzes the reversible isomerization-deamination of glucosamine 6-phosphate (GlcN6P) to form fructose 6-phosphate (Fru6P) and ammonium ion. In Tolumonas auensis (strain DSM 9187 / NBRC 110442 / TA 4), this protein is Glucosamine-6-phosphate deaminase.